The chain runs to 251 residues: Triosephosphate isomerase (251 aa).

A substrate-binding site is contributed by 9–11; sequence NWK. The active-site Electrophile is histidine 95. The active-site Proton acceptor is the glutamate 167. Substrate-binding positions include glycine 173, serine 213, and 234-235; that span reads GG.

The protein belongs to the triosephosphate isomerase family. Homodimer.

Its subcellular location is the cytoplasm. It carries out the reaction D-glyceraldehyde 3-phosphate = dihydroxyacetone phosphate. It functions in the pathway carbohydrate biosynthesis; gluconeogenesis. Its pathway is carbohydrate degradation; glycolysis; D-glyceraldehyde 3-phosphate from glycerone phosphate: step 1/1. Functionally, involved in the gluconeogenesis. Catalyzes stereospecifically the conversion of dihydroxyacetone phosphate (DHAP) to D-glyceraldehyde-3-phosphate (G3P). In Lacticaseibacillus casei (strain BL23) (Lactobacillus casei), this protein is Triosephosphate isomerase.